The following is a 498-amino-acid chain: Guanosine-5'-triphosphate,3'-diphosphate pyrophosphatase (498 aa).

This sequence belongs to the GppA/Ppx family. GppA subfamily.

The catalysed reaction is guanosine 3'-diphosphate 5'-triphosphate + H2O = guanosine 3',5'-bis(diphosphate) + phosphate + H(+). It participates in purine metabolism; ppGpp biosynthesis; ppGpp from GTP: step 2/2. Functionally, catalyzes the conversion of pppGpp to ppGpp. Guanosine pentaphosphate (pppGpp) is a cytoplasmic signaling molecule which together with ppGpp controls the 'stringent response', an adaptive process that allows bacteria to respond to amino acid starvation, resulting in the coordinated regulation of numerous cellular activities. The sequence is that of Guanosine-5'-triphosphate,3'-diphosphate pyrophosphatase from Yersinia pseudotuberculosis serotype O:1b (strain IP 31758).